Here is a 364-residue protein sequence, read N- to C-terminus: Paraneoplastic antigen Ma2 homolog (364 aa).

The residue at position 2 (Ala-2) is an N-acetylalanine. Residues 335 to 351 (EEEEATFENENTEEPEG) show a composition bias toward acidic residues. A disordered region spans residues 335–364 (EEEEATFENENTEEPEGGDGYGHWGNEAND).

This sequence belongs to the PNMA family.

It is found in the nucleus. Its subcellular location is the nucleolus. This Bos taurus (Bovine) protein is Paraneoplastic antigen Ma2 homolog (PNMA2).